The chain runs to 511 residues: Glucans biosynthesis protein G (511 aa).

An N-terminal signal peptide occupies residues 1 to 22; that stretch reads MMKMRWLSAAVMLTLYTSSSWA.

Belongs to the OpgD/OpgG family.

It localises to the periplasm. The protein operates within glycan metabolism; osmoregulated periplasmic glucan (OPG) biosynthesis. Involved in the biosynthesis of osmoregulated periplasmic glucans (OPGs). In Escherichia coli (strain K12 / MC4100 / BW2952), this protein is Glucans biosynthesis protein G.